The sequence spans 175 residues: Cytidylate kinase (175 aa).

Residue 7 to 15 (GQPGSGKTS) coordinates ATP.

Belongs to the cytidylate kinase family. Type 2 subfamily.

The protein resides in the cytoplasm. It catalyses the reaction CMP + ATP = CDP + ADP. The enzyme catalyses dCMP + ATP = dCDP + ADP. The chain is Cytidylate kinase from Methanocella arvoryzae (strain DSM 22066 / NBRC 105507 / MRE50).